The chain runs to 276 residues: MRGAYYVITALLVVASSQTSADSGHRLHVYDHDVVAAENAAAKTLPQQSLRGSRDVPDDLAHEERAIISELVEEGAKLIPRAAENVEEMPRVTEAVGKRPRVAEKDALEKASGADEASKKPRNTATDDAFQGMSTEWELELPFKEWNTEIEPMREMPEPKWSWEKRKLVHEAFVKLCAEDLNPTVYETARLWSLFDGKAKSRPATFHRQVLIQLAKENVRRDVLIMKSVESEWDRWNEVSILSRVDVLNMLLNVHFQRWKRMYNAFGEQRSKLIAL.

Residues 1-21 (MRGAYYVITALLVVASSQTSA) form the signal peptide. The RxLR-dEER motif lies at 48-65 (QSLRGSRDVPDDLAHEER). The tract at residues 97-130 (GKRPRVAEKDALEKASGADEASKKPRNTATDDAF) is disordered. The span at 101–119 (RVAEKDALEKASGADEASK) shows a compositional bias: basic and acidic residues.

The protein belongs to the RxLR effector family.

Its subcellular location is the secreted. It localises to the host nucleus. Its function is as follows. Secreted effector that completely suppresses the host cell death induced by cell death-inducing proteins. The sequence is that of Secreted RxLR effector protein 120 from Plasmopara viticola (Downy mildew of grapevine).